We begin with the raw amino-acid sequence, 152 residues long: Probable flagellum biosynthesis repressor protein FlbT (152 aa).

It belongs to the FlbT family.

Its function is as follows. Has a post-transcriptional repressor function in flagellum biogenesis. Associates with the 5'-UTR of fljK mRNA and promotes its degradation. This is Probable flagellum biosynthesis repressor protein FlbT from Brucella anthropi (strain ATCC 49188 / DSM 6882 / CCUG 24695 / JCM 21032 / LMG 3331 / NBRC 15819 / NCTC 12168 / Alc 37) (Ochrobactrum anthropi).